The following is a 25-amino-acid chain: C-reactive protein P2 subunit 4 (25 aa).

Residues 1 to 25 (GRSLVFPEETANSFVELFPAKELSL) form the Pentraxin (PTX) domain.

Belongs to the pentraxin family. Heteropentamer. Discoid arrangement of 5 non-covalently bound subunits 1, 2, 3 and 4. Ca(2+) is required as a cofactor. Glycosylated.

The protein resides in the secreted. Displays several functions associated with host defense: it promotes agglutination, bacterial capsular swelling, phagocytosis, and complement fixation through its calcium-dependent binding to phosphorylcholine. This is C-reactive protein P2 subunit 4 from Gadus morhua (Atlantic cod).